Here is a 276-residue protein sequence, read N- to C-terminus: Large ribosomal subunit protein uL2 (276 aa).

Residues 225-276 (MNPVDHPHGGGEGRAPVGRKHPVTPWGKPAMGAKTRKKRKLSDKLIVKPRNK) are disordered. A compositionally biased stretch (basic residues) spans 258-276 (KTRKKRKLSDKLIVKPRNK).

It belongs to the universal ribosomal protein uL2 family. As to quaternary structure, part of the 50S ribosomal subunit. Forms a bridge to the 30S subunit in the 70S ribosome.

One of the primary rRNA binding proteins. Required for association of the 30S and 50S subunits to form the 70S ribosome, for tRNA binding and peptide bond formation. It has been suggested to have peptidyltransferase activity; this is somewhat controversial. Makes several contacts with the 16S rRNA in the 70S ribosome. This chain is Large ribosomal subunit protein uL2, found in Moorella thermoacetica (strain ATCC 39073 / JCM 9320).